A 186-amino-acid chain; its full sequence is Temperature-induced lipocalin-1 (186 aa).

An HPR (Hydrophobic proline-rich) motif is present at residues 90 to 97; it reads PPFLPIIP. The tract at residues 154 to 174 is disordered; that stretch reads KLHKTPQSDTPPESNTAPEDS. Residues 158–171 show a composition bias toward polar residues; sequence TPQSDTPPESNTAP.

It belongs to the calycin superfamily. Lipocalin family. Expressed ubiquitously at similar levels, except in dry seeds (at protein level). Present in seeds.

The protein localises to the cell membrane. It localises to the cytoplasm. Its subcellular location is the plastid. The protein resides in the chloroplast membrane. Involved in basal (BT) and acquired thermotolerance (AT), probably by preventing plasma membrane lipids peroxidation induced by severe heat-shock (HS). Lipocalin that confers protection against oxidative stress caused by heat, freezing, paraquat and light. Confers resistance to high salt (NaCl) levels, probably by protecting chloroplasts from ion toxicity via ion homeostasis maintenance. Required for seed longevity by ensuring polyunsaturated lipids integrity. The protein is Temperature-induced lipocalin-1 of Arabidopsis thaliana (Mouse-ear cress).